We begin with the raw amino-acid sequence, 329 residues long: tRNA dimethylallyltransferase (329 aa).

12-19 (GPTSVGKT) contacts ATP. 14–19 (TSVGKT) provides a ligand contact to substrate. Residues 37 to 40 (DSRY) are interaction with substrate tRNA. Residues 306 to 329 (LREESDEGDVAVHQSGGGKEAPRA) form a disordered region. Over residues 320–329 (SGGGKEAPRA) the composition is skewed to gly residues.

It belongs to the IPP transferase family. Monomer. Mg(2+) serves as cofactor.

It catalyses the reaction adenosine(37) in tRNA + dimethylallyl diphosphate = N(6)-dimethylallyladenosine(37) in tRNA + diphosphate. Functionally, catalyzes the transfer of a dimethylallyl group onto the adenine at position 37 in tRNAs that read codons beginning with uridine, leading to the formation of N6-(dimethylallyl)adenosine (i(6)A). In Thermomicrobium roseum (strain ATCC 27502 / DSM 5159 / P-2), this protein is tRNA dimethylallyltransferase.